A 184-amino-acid chain; its full sequence is Peptide deformylase (184 aa).

The Fe cation site is built by cysteine 98 and histidine 140. Glutamate 141 is an active-site residue. Histidine 144 is a binding site for Fe cation.

This sequence belongs to the polypeptide deformylase family. Requires Fe(2+) as cofactor.

The enzyme catalyses N-terminal N-formyl-L-methionyl-[peptide] + H2O = N-terminal L-methionyl-[peptide] + formate. Functionally, removes the formyl group from the N-terminal Met of newly synthesized proteins. Requires at least a dipeptide for an efficient rate of reaction. N-terminal L-methionine is a prerequisite for activity but the enzyme has broad specificity at other positions. The protein is Peptide deformylase of Bacteroides thetaiotaomicron (strain ATCC 29148 / DSM 2079 / JCM 5827 / CCUG 10774 / NCTC 10582 / VPI-5482 / E50).